We begin with the raw amino-acid sequence, 179 residues long: Replication restart protein DnaT (179 aa).

Positions S151–E168 are enriched in polar residues. Positions S151 to G179 are disordered.

The protein belongs to the DnaT family. In terms of assembly, homooligomerizes. Interacts with PriB. Component of the replication restart primosome. Primosome assembly occurs via a 'hand-off' mechanism. PriA binds to replication forks, subsequently PriB then DnaT bind; DnaT then displaces ssDNA to generate the helicase loading substrate.

In terms of biological role, involved in the restart of stalled replication forks, which reloads the replicative helicase on sites other than the origin of replication. Can function in multiple replication restart pathways. Displaces ssDNA from a PriB-ssDNA complex. Probably forms a spiral filament on ssDNA. The chain is Replication restart protein DnaT from Salmonella heidelberg (strain SL476).